Here is a 360-residue protein sequence, read N- to C-terminus: Coiled-coil domain-containing protein 86 (360 aa).

The span at 1-12 (MDTPLRRSRRLG) shows a compositional bias: basic residues. 2 disordered regions span residues 1 to 314 (MDTP…ENER) and 328 to 360 (LKRA…AAKI). Residues Ser-21, Ser-24, Ser-47, Ser-50, and Ser-58 each carry the phosphoserine modification. The residue at position 65 (Thr-65) is a Phosphothreonine. A phosphoserine mark is found at Ser-66, Ser-69, Ser-80, Ser-91, Ser-102, Ser-110, Ser-113, and Ser-128. The segment covering 66–83 (SPGSPRLQQGSGLESPQG) has biased composition (polar residues). The segment covering 153–164 (QLPPVPGSPEPY) has biased composition (pro residues). Phosphoserine occurs at positions 188, 217, and 218. The segment covering 238-254 (GKPKSGRVWKDRSKKRF) has biased composition (basic residues). A coiled-coil region spans residues 272 to 323 (KERQERKLAKDFARHLEEEKERRRQEKKQRRAENLKRRLENERKAEVVQVIR). 2 stretches are compositionally biased toward basic and acidic residues: residues 273–295 (ERQE…ERRR) and 302–314 (RAEN…ENER). Arg-342 carries the citrulline modification.

Post-translationally, citrullinated by PADI4.

The protein localises to the nucleus. It is found in the chromosome. It localises to the nucleolus. In terms of biological role, required for proper chromosome segregation during mitosis and error-free mitotic progression. This is Coiled-coil domain-containing protein 86 from Pongo abelii (Sumatran orangutan).